Here is a 221-residue protein sequence, read N- to C-terminus: UPF0328 protein ECU11_2110 (221 aa).

Belongs to the UPF0328 family.

The protein is UPF0328 protein ECU11_2110 of Encephalitozoon cuniculi (strain GB-M1) (Microsporidian parasite).